The following is a 459-amino-acid chain: MNRLPSSASALACTAHALNLIEKRTLDHEEMKQLNREVIDYFKEHVNPGFLEYRKSVTAGGDYGAVEWQAGSLNTLVDTQGQEFIDCLGGFGIFNVGHRNPVVVSAVQNQLAKQPLHSQELLDPLRAMLAKTLAALTPGKLKYSFFSNSGTESVEAALKLAKAYQSPRGKFTFIATSGAFHGKSLGALSATAKSTFRKPFMPLLPGFRHVPFGDINAMRTMLTECRKTGDDVAAVILEPIQGEGGVILPPLGYLPAVRKLCDEFDALLILDEVQTGMGRTGKMFACEHENVQPDILCLAKALGGGVMPIGATVATEEVFSVLFDNPFLHTTTFGGNPLSCAAALATINVLLEQNLPAQAEQKGDMLLDGFLQLGREYPDLVQDARGKGMLIAIEFVDNEIGYSFASEMFRQRILVAGTLNNSKTIRIEPPLTLTIEQCEQVLKATRTALAALRVSVEEA.

Pyridoxal 5'-phosphate is bound by residues 150-151 and Q274; that span reads GT. K300 carries the post-translational modification N6-(pyridoxal phosphate)lysine. T332 contacts pyridoxal 5'-phosphate.

Belongs to the class-III pyridoxal-phosphate-dependent aminotransferase family. Putrescine aminotransferase subfamily. The cofactor is pyridoxal 5'-phosphate.

It catalyses the reaction an alkane-alpha,omega-diamine + 2-oxoglutarate = an omega-aminoaldehyde + L-glutamate. The enzyme catalyses putrescine + 2-oxoglutarate = 1-pyrroline + L-glutamate + H2O. The catalysed reaction is cadaverine + 2-oxoglutarate = 5-aminopentanal + L-glutamate. It participates in amine and polyamine degradation; putrescine degradation; 4-aminobutanal from putrescine (transaminase route): step 1/1. Catalyzes the aminotransferase reaction from putrescine to 2-oxoglutarate, leading to glutamate and 4-aminobutanal, which spontaneously cyclizes to form 1-pyrroline. This is the first step in one of two pathways for putrescine degradation, where putrescine is converted into 4-aminobutanoate (gamma-aminobutyrate or GABA) via 4-aminobutanal. Also functions as a cadaverine transaminase in a a L-lysine degradation pathway to succinate that proceeds via cadaverine, glutarate and L-2-hydroxyglutarate. This chain is Putrescine aminotransferase, found in Enterobacter sp. (strain 638).